We begin with the raw amino-acid sequence, 811 residues long: Potassium transporter 7 (811 aa).

The Cytoplasmic portion of the chain corresponds to 1–52 (MPSYQYLLSLLFYILDCTDRFSVIVTIHNHRVGVLMIVLLQDQWKSYCRTIS). The chain crosses the membrane as a helical span at residues 53–73 (LLAFQSFGVVYGDLSTSPLYV). Over 74–93 (YKSAFSGRLNNYRDETTIFG) the chain is Extracellular. Residues 94–114 (LFSLIFWTLTLLPLLKYVIIV) form a helical membrane-spanning segment. The Cytoplasmic segment spans residues 115 to 181 (LNADDNGEGG…EKHRKLRTCL (67 aa)). The helical transmembrane segment at 182–202 (LLFVLFGACMVIGDGVFTPAI) threads the bilayer. The Extracellular portion of the chain corresponds to 203 to 217 (SVLSAISGLKDPGPG). Residues 218–238 (GIPDGWVVFIACIVLVGLFAL) form a helical membrane-spanning segment. At 239–245 (QHRGTHR) the chain is on the cytoplasmic side. The helical transmembrane segment at 246–266 (VAFMFAPIVVVWLLSIGVIGL) threads the bilayer. At 267–296 (YNIIHWNHRIFLALSPHYVIKFFKMTGKDG) the chain is on the extracellular side. The chain crosses the membrane as a helical span at residues 297-317 (WLSLGGVLLAITGTEAMFADL). The Cytoplasmic segment spans residues 318–326 (GHFTAASIR). A helical transmembrane segment spans residues 327–347 (LAFVGAIYPCLVLQYMGQAAF). Residues 348-366 (LSRNMSAVEDSFYQSVPRS) are Extracellular-facing. Residue Asn351 is glycosylated (N-linked (GlcNAc...) asparagine). A helical transmembrane segment spans residues 367–387 (LFWPVFVIATLAAVVGSQSII). Over 388 to 418 (SATFSIVKQCLSLGCFPRVKVVHTSRWIHGQ) the chain is Cytoplasmic. A helical transmembrane segment spans residues 419–439 (IYIPEINWILMVLCLAVTLGF). Residues 440-450 (RDTTVIGNAYG) are Extracellular-facing. Residues 451-471 (LACIVVMFVTTWLMALVIIFV) traverse the membrane as a helical segment. Residues 472 to 475 (WQKN) are Cytoplasmic-facing. Residues 476-496 (ILLALLFVVAFGSIEVVYLSA) traverse the membrane as a helical segment. The Extracellular portion of the chain corresponds to 497-503 (AVTKVPQ). Residues 504-524 (GGWAPIVFAFVFMLVMYVWHY) traverse the membrane as a helical segment. At 525–811 (GSRRKYLFDL…LVEVGMIYYV (287 aa)) the chain is on the cytoplasmic side. The tract at residues 680-702 (TGLVMRDSNNEASGTSLTRSSRS) is disordered.

It belongs to the HAK/KUP transporter (TC 2.A.72.3) family. As to expression, expressed in roots and shoots.

The protein resides in the membrane. High-affinity potassium transporter. The protein is Potassium transporter 7 (HAK7) of Oryza sativa subsp. japonica (Rice).